The sequence spans 269 residues: Phosphonates import ATP-binding protein PhnC (269 aa).

An ABC transporter domain is found at 8-251; it reads IHLYGASLRH…LLDALYANEQ (244 aa). 40–47 is a binding site for ATP; sequence GPSGAGKS.

It belongs to the ABC transporter superfamily. Phosphonates importer (TC 3.A.1.9.1) family. The complex is composed of two ATP-binding proteins (PhnC), two transmembrane proteins (PhnE) and a solute-binding protein (PhnD).

The protein resides in the cell inner membrane. The catalysed reaction is phosphonate(out) + ATP + H2O = phosphonate(in) + ADP + phosphate + H(+). Its function is as follows. Part of the ABC transporter complex PhnCDE involved in phosphonates import. Responsible for energy coupling to the transport system. The sequence is that of Phosphonates import ATP-binding protein PhnC from Pseudomonas putida (strain ATCC 47054 / DSM 6125 / CFBP 8728 / NCIMB 11950 / KT2440).